The primary structure comprises 61 residues: Small ribosomal subunit protein uS14 (61 aa).

Zn(2+) contacts are provided by Cys-24, Cys-27, Cys-40, and Cys-43.

This sequence belongs to the universal ribosomal protein uS14 family. Zinc-binding uS14 subfamily. As to quaternary structure, part of the 30S ribosomal subunit. Contacts proteins S3 and S10. Requires Zn(2+) as cofactor.

Binds 16S rRNA, required for the assembly of 30S particles and may also be responsible for determining the conformation of the 16S rRNA at the A site. In Natranaerobius thermophilus (strain ATCC BAA-1301 / DSM 18059 / JW/NM-WN-LF), this protein is Small ribosomal subunit protein uS14.